The following is a 102-amino-acid chain: Large ribosomal subunit protein bL21 (102 aa).

The protein belongs to the bacterial ribosomal protein bL21 family. As to quaternary structure, part of the 50S ribosomal subunit. Contacts protein L20.

Its function is as follows. This protein binds to 23S rRNA in the presence of protein L20. This chain is Large ribosomal subunit protein bL21, found in Desulfovibrio desulfuricans (strain ATCC 27774 / DSM 6949 / MB).